A 1436-amino-acid polypeptide reads, in one-letter code: DNA polymerase III PolC-type (1436 aa).

In terms of domain architecture, Exonuclease spans Tyr420–Phe576.

It belongs to the DNA polymerase type-C family. PolC subfamily.

Its subcellular location is the cytoplasm. The enzyme catalyses DNA(n) + a 2'-deoxyribonucleoside 5'-triphosphate = DNA(n+1) + diphosphate. In terms of biological role, required for replicative DNA synthesis. This DNA polymerase also exhibits 3' to 5' exonuclease activity. This chain is DNA polymerase III PolC-type, found in Staphylococcus aureus (strain MW2).